The sequence spans 473 residues: Pentatricopeptide repeat-containing protein At3g60050 (473 aa).

PPR repeat units follow at residues 148–182, 183–217, 218–252, 253–287, 288–322, 323–357, 358–392, 393–427, and 428–462; these read TVNS…GFPT, TART…NYRP, FKHS…GFSP, DVLT…GFSP, DSYT…GIDP, SVLH…GCRP, DVVC…GQLP, NVFT…GCNP, and NFVV…GHYV.

The protein belongs to the PPR family. P subfamily.

This Arabidopsis thaliana (Mouse-ear cress) protein is Pentatricopeptide repeat-containing protein At3g60050.